Reading from the N-terminus, the 339-residue chain is 2-oxoisovalerate dehydrogenase subunit beta (339 aa).

As to quaternary structure, heterodimer of an alpha and a beta chain. It depends on thiamine diphosphate as a cofactor.

It catalyses the reaction N(6)-[(R)-lipoyl]-L-lysyl-[protein] + 3-methyl-2-oxobutanoate + H(+) = N(6)-[(R)-S(8)-2-methylpropanoyldihydrolipoyl]-L-lysyl-[protein] + CO2. In terms of biological role, the branched-chain alpha-keto dehydrogenase complex catalyzes the overall conversion of alpha-keto acids to acyl-CoA and CO(2). It contains multiple copies of three enzymatic components: branched-chain alpha-keto acid decarboxylase (E1), lipoamide acyltransferase (E2) and lipoamide dehydrogenase (E3). The sequence is that of 2-oxoisovalerate dehydrogenase subunit beta (bkdA2) from Pseudomonas putida (Arthrobacter siderocapsulatus).